The sequence spans 99 residues: UPF0125 protein PM0166 (99 aa).

The protein belongs to the UPF0125 (RnfH) family.

The sequence is that of UPF0125 protein PM0166 from Pasteurella multocida (strain Pm70).